The sequence spans 679 residues: Sodium-dependent phosphate transporter 1 (679 aa).

Transmembrane regions (helical) follow at residues 21–41 (YLWM…SVGA), 62–82 (ACIL…AKVS), 100–120 (GLLM…QLVA), 158–178 (IVMS…ILFF), 203–223 (ACTV…LLGF), and 230–250 (GTIL…WFFV). Ser265 and Ser269 each carry phosphoserine. Positions 268 to 288 (ESPLMEKKNSLKEDHEETKLS) are disordered. Over residues 271-286 (LMEKKNSLKEDHEETK) the composition is skewed to basic and acidic residues. The next 4 membrane-spanning stretches (helical) occupy residues 511–531 (VSLL…FAHG), 558–578 (VATP…GLWV), 600–620 (FSIE…GLPI), and 650–670 (IFMA…AIMA). Residues 550–558 (DTGDVSSKV) are a.

Belongs to the inorganic phosphate transporter (PiT) (TC 2.A.20) family.

It is found in the cell membrane. It catalyses the reaction 2 Na(+)(out) + phosphate(out) = 2 Na(+)(in) + phosphate(in). Its function is as follows. Sodium-phosphate symporter which preferentially transports the monovalent form of phosphate with a stoichiometry of two sodium ions per phosphate ion. May play a role in extracellular matrix and cartilage calcification as well as in vascular calcification. Essential for cell proliferation but this function is independent of its phosphate transporter activity. This is Sodium-dependent phosphate transporter 1 (SLC20A1) from Pongo abelii (Sumatran orangutan).